The sequence spans 205 residues: Probable calcium-binding protein CML41 (205 aa).

The tract at residues 26–55 (SFQNRRRSPKSNSSSTLNSPRSNSDDNNNI) is disordered. Positions 35 to 54 (KSNSSSTLNSPRSNSDDNNN) are enriched in low complexity. 4 consecutive EF-hand domains span residues 60-95 (ASKEELRQVFSHFDSDGDGKISAFELRHYFGSVGEY), 96-131 (ISHEAAQEAINEVDTDADGSLGFEDFVGLMTRRDLY), 137-173 (DGDGELKTAFEMFEVEKGSGCITPKGLQKMLVKLGES), and 174-205 (RTYGECEAMIKFYDIDGNGILDFHEFRQMMTV). Residues aspartate 73, aspartate 75, aspartate 77, lysine 79, glutamate 84, aspartate 109, aspartate 111, aspartate 113, serine 115, and aspartate 120 each contribute to the Ca(2+) site. Residues aspartate 187, aspartate 189, asparagine 191, and glutamate 198 each coordinate Ca(2+).

Potential calcium sensor. The protein is Probable calcium-binding protein CML41 (CML41) of Arabidopsis thaliana (Mouse-ear cress).